A 154-amino-acid chain; its full sequence is Myoglobin (154 aa).

Residues 2–148 (GLSDGEWQLV…FRKDIAAKYK (147 aa)) enclose the Globin domain. Residue S4 is modified to Phosphoserine. H65 is a binding site for nitrite. H65 contributes to the O2 binding site. T68 is modified (phosphothreonine). Residue H94 coordinates heme b.

Belongs to the globin family. As to quaternary structure, monomeric.

Its subcellular location is the cytoplasm. The protein resides in the sarcoplasm. The catalysed reaction is Fe(III)-heme b-[protein] + nitric oxide + H2O = Fe(II)-heme b-[protein] + nitrite + 2 H(+). It carries out the reaction H2O2 + AH2 = A + 2 H2O. Its function is as follows. Monomeric heme protein which primary function is to store oxygen and facilitate its diffusion within muscle tissues. Reversibly binds oxygen through a pentacoordinated heme iron and enables its timely and efficient release as needed during periods of heightened demand. Depending on the oxidative conditions of tissues and cells, and in addition to its ability to bind oxygen, it also has a nitrite reductase activity whereby it regulates the production of bioactive nitric oxide. Under stress conditions, like hypoxia and anoxia, it also protects cells against reactive oxygen species thanks to its pseudoperoxidase activity. The protein is Myoglobin (MB) of Delphinus delphis (Short-beaked common dolphin).